The primary structure comprises 116 residues: S-adenosylmethionine decarboxylase proenzyme (116 aa).

The active-site Schiff-base intermediate with substrate; via pyruvic acid is Ser63. Ser63 is modified (pyruvic acid (Ser); by autocatalysis). The active-site Proton acceptor; for processing activity is His68. The active-site Proton donor; for catalytic activity is the Cys83.

This sequence belongs to the prokaryotic AdoMetDC family. Type 1 subfamily. In terms of assembly, heterotetramer of two alpha and two beta chains arranged as a dimer of alpha/beta heterodimers. It depends on pyruvate as a cofactor. Is synthesized initially as an inactive proenzyme. Formation of the active enzyme involves a self-maturation process in which the active site pyruvoyl group is generated from an internal serine residue via an autocatalytic post-translational modification. Two non-identical subunits are generated from the proenzyme in this reaction, and the pyruvate is formed at the N-terminus of the alpha chain, which is derived from the carboxyl end of the proenzyme. The post-translation cleavage follows an unusual pathway, termed non-hydrolytic serinolysis, in which the side chain hydroxyl group of the serine supplies its oxygen atom to form the C-terminus of the beta chain, while the remainder of the serine residue undergoes an oxidative deamination to produce ammonia and the pyruvoyl group blocking the N-terminus of the alpha chain.

The enzyme catalyses S-adenosyl-L-methionine + H(+) = S-adenosyl 3-(methylsulfanyl)propylamine + CO2. It functions in the pathway amine and polyamine biosynthesis; S-adenosylmethioninamine biosynthesis; S-adenosylmethioninamine from S-adenosyl-L-methionine: step 1/1. Its function is as follows. Catalyzes the decarboxylation of S-adenosylmethionine to S-adenosylmethioninamine (dcAdoMet), the propylamine donor required for the synthesis of the polyamines spermine and spermidine from the diamine putrescine. This is S-adenosylmethionine decarboxylase proenzyme from Clostridium botulinum (strain 657 / Type Ba4).